An 81-amino-acid polypeptide reads, in one-letter code: Sulfur carrier protein TusA (81 aa).

Cys19 acts as the Cysteine persulfide intermediate in catalysis.

It belongs to the sulfur carrier protein TusA family. In terms of assembly, interacts with IscS.

It is found in the cytoplasm. Its pathway is tRNA modification. Its function is as follows. Sulfur carrier protein involved in sulfur trafficking in the cell. Part of a sulfur-relay system required for 2-thiolation during synthesis of 2-thiouridine of the modified wobble base 5-methylaminomethyl-2-thiouridine (mnm(5)s(2)U) in tRNA. Interacts with IscS and stimulates its cysteine desulfurase activity. Accepts an activated sulfur from IscS, which is then transferred to TusD, and thus determines the direction of sulfur flow from IscS to 2-thiouridine formation. Also appears to be involved in sulfur transfer for the biosynthesis of molybdopterin. The polypeptide is Sulfur carrier protein TusA (Enterobacter sp. (strain 638)).